The primary structure comprises 101 residues: Small ribosomal subunit protein uS14 (101 aa).

This sequence belongs to the universal ribosomal protein uS14 family. Part of the 30S ribosomal subunit. Contacts proteins S3 and S10.

Binds 16S rRNA, required for the assembly of 30S particles and may also be responsible for determining the conformation of the 16S rRNA at the A site. The protein is Small ribosomal subunit protein uS14 of Ehrlichia canis (strain Jake).